The primary structure comprises 366 residues: MVIMLKFIDLFCGCGGFSRGFVEEGFEPLVAIELNEDAAFSYALNFNGQIYEKIRPGEFKLKELKGYVGIYPFKFPFEEEDIKWLKRLGTLNEKTKKLSPVVINDDIREIHAIEIEKFIKNKKVDVIIGGPPCEGYTGANPKREKNPYDRLYKDETGRLVLEYIRIVGDLQPKIFVMENVPGIKEVRGAIIKEFREIGYEDVYFNTLRAEDYGNPSVRRRVFVSNIEINPEKTQPKTVIEAIGDLMYKGRDVPNHEFAALPARFRKRVHKLGWGDAFIYFKGANRRLGNYIRLHPLKLAETVMGKRFFIHPYEDRLLTPREQARLMSYPDYHLFAGGIRSCYNQIGESVPVALSRAIARVIKENLK.

Residues 5-366 (LKFIDLFCGC…IARVIKENLK (362 aa)) enclose the SAM-dependent MTase C5-type domain. Cys-133 is an active-site residue.

The protein belongs to the class I-like SAM-binding methyltransferase superfamily. C5-methyltransferase family.

It catalyses the reaction a 2'-deoxycytidine in DNA + S-adenosyl-L-methionine = a 5-methyl-2'-deoxycytidine in DNA + S-adenosyl-L-homocysteine + H(+). A putative methylase that probably protects DNA from cleavage by the MjaORF1200P endonuclease. This Methanocaldococcus jannaschii (strain ATCC 43067 / DSM 2661 / JAL-1 / JCM 10045 / NBRC 100440) (Methanococcus jannaschii) protein is Putative type II methyltransferase M.MjaORF1200P.